The following is a 78-amino-acid chain: Large ribosomal subunit protein bL28 (78 aa).

Positions Met-1–Asn-23 are disordered.

The protein belongs to the bacterial ribosomal protein bL28 family.

This is Large ribosomal subunit protein bL28 from Shewanella pealeana (strain ATCC 700345 / ANG-SQ1).